The primary structure comprises 255 residues: Flap endonuclease Xni (255 aa).

D105 provides a ligand contact to Mg(2+). The 5'-3' exonuclease domain maps to 162–254 (EHKQFIDYLA…LKQFRLPKAN (93 aa)). L172, A173, P181, V183, and I186 together coordinate K(+). The tract at residues 185–190 (GIGPKS) is interaction with DNA.

Belongs to the Xni family. The cofactor is Mg(2+). K(+) serves as cofactor.

Functionally, has flap endonuclease activity. During DNA replication, flap endonucleases cleave the 5'-overhanging flap structure that is generated by displacement synthesis when DNA polymerase encounters the 5'-end of a downstream Okazaki fragment. This chain is Flap endonuclease Xni, found in Shewanella piezotolerans (strain WP3 / JCM 13877).